Reading from the N-terminus, the 117-residue chain is Large ribosomal subunit protein bL20 (117 aa).

Belongs to the bacterial ribosomal protein bL20 family.

Binds directly to 23S ribosomal RNA and is necessary for the in vitro assembly process of the 50S ribosomal subunit. It is not involved in the protein synthesizing functions of that subunit. The polypeptide is Large ribosomal subunit protein bL20 (Glaesserella parasuis serovar 5 (strain SH0165) (Haemophilus parasuis)).